We begin with the raw amino-acid sequence, 808 residues long: Auxin response factor 4 (808 aa).

Over residues 1-13 the composition is skewed to pro residues; the sequence is MPPAAMAPPPPPQ. Residues 1 to 20 are disordered; sequence MPPAAMAPPPPPQGSSTGDP. The TF-B3 DNA-binding region spans 129-231; sequence FCKTLTASDT…ELRVGVRRAM (103 aa). A compositionally biased stretch (basic and acidic residues) spans 342–352; that stretch reads PSTIPRPDRVS. Disordered stretches follow at residues 342–433, 661–691, and 778–808; these read PSTI…DSDV, TAGT…VAST, and QKMN…KSDN. Residues 402–432 show a composition bias toward polar residues; that stretch reads AQAQRSQNSTVLQGQEQMTLRSNLTESNDSD. The 94-residue stretch at 692–785 folds into the PB1 domain; sequence RSCTKVHKQG…EVQKMNSKSN (94 aa). The span at 787-799 shows a compositional bias: basic and acidic residues; that stretch reads PRKDDSSENEKGH.

This sequence belongs to the ARF family. In terms of assembly, homodimers and heterodimers. Expressed in roots, culms, leaves and young panicles.

It localises to the nucleus. Its function is as follows. Auxin response factors (ARFs) are transcriptional factors that bind specifically to the DNA sequence 5'-TGTCTC-3' found in the auxin-responsive promoter elements (AuxREs). In Oryza sativa subsp. japonica (Rice), this protein is Auxin response factor 4 (ARF4).